A 215-amino-acid polypeptide reads, in one-letter code: Pyridoxine/pyridoxamine 5'-phosphate oxidase (215 aa).

Substrate-binding positions include arginine 9–tyrosine 12 and lysine 69. Residues arginine 64–lysine 69, phenylalanine 79–threonine 80, lysine 86, and glutamine 108 each bind FMN. 3 residues coordinate substrate: tyrosine 126, arginine 130, and serine 134. FMN is bound by residues glutamine 143–serine 144 and tryptophan 188. Arginine 194–histidine 196 contacts substrate. Residue arginine 198 coordinates FMN.

It belongs to the pyridoxamine 5'-phosphate oxidase family. As to quaternary structure, homodimer. The cofactor is FMN.

The catalysed reaction is pyridoxamine 5'-phosphate + O2 + H2O = pyridoxal 5'-phosphate + H2O2 + NH4(+). It catalyses the reaction pyridoxine 5'-phosphate + O2 = pyridoxal 5'-phosphate + H2O2. It participates in cofactor metabolism; pyridoxal 5'-phosphate salvage; pyridoxal 5'-phosphate from pyridoxamine 5'-phosphate: step 1/1. The protein operates within cofactor metabolism; pyridoxal 5'-phosphate salvage; pyridoxal 5'-phosphate from pyridoxine 5'-phosphate: step 1/1. Functionally, catalyzes the oxidation of either pyridoxine 5'-phosphate (PNP) or pyridoxamine 5'-phosphate (PMP) into pyridoxal 5'-phosphate (PLP). The sequence is that of Pyridoxine/pyridoxamine 5'-phosphate oxidase from Pseudomonas fluorescens (strain Pf0-1).